The chain runs to 816 residues: Sucrose synthase 1 (816 aa).

Residues 280 to 757 (MVFNVVIMSP…GLQRIEEKYT (478 aa)) form a GT-B glycosyltransferase region.

The protein belongs to the glycosyltransferase 1 family. Plant sucrose synthase subfamily. As to quaternary structure, homotetramer or heterotetramer with SUS2. As to expression, expressed in root phloem and leaf mesophyll. Expressed in phloem tissues and aleurone layers of seeds and at lower levels in the pericarp and endosperm cells (at protein level). Predominantly expressed in elongating tissues including roots, developing leaves and internodes.

It carries out the reaction an NDP-alpha-D-glucose + D-fructose = a ribonucleoside 5'-diphosphate + sucrose + H(+). Functionally, sucrose-cleaving enzyme that provides UDP-glucose and fructose for various metabolic pathways. The protein is Sucrose synthase 1 (SUS1) of Oryza sativa subsp. japonica (Rice).